The sequence spans 287 residues: (S)-phenoxypropionate/alpha-ketoglutarate-dioxygenase (287 aa).

H102 and D104 together coordinate Fe cation. T129 and W242 together coordinate 2-oxoglutarate. H257 contacts Fe cation. R268 lines the 2-oxoglutarate pocket.

This sequence belongs to the TfdA dioxygenase family. As to quaternary structure, monomer. Requires Fe cation as cofactor. It depends on L-ascorbate as a cofactor.

The catalysed reaction is (S)-2-(4-chloro-2-methylphenoxy)propanoate + 2-oxoglutarate + O2 = 2-methyl-4-chlorophenol + pyruvate + succinate + CO2. It catalyses the reaction (S)-(2,4-dichlorophenoxy)propanoate + 2-oxoglutarate + O2 = 2,4-dichlorophenol + pyruvate + succinate + CO2. It participates in xenobiotic degradation; 2-(2,4-dichlorophenoxy)propanoate degradation. In terms of biological role, involved in the degradation of the phenoxypropionate herbicides. Catalyzes the enantiospecific cleavage of the ether bond in the herbicid S-dichlorprop ((S)-2-(2,4-dichlorophenoxy)propionate)(S-2,4-DP) and S-mecoprop ((S)-2-(4-chloro-2-methylphenoxy)propionate)(S-2,4-MCPP). It can also accept (RS)-2-(4-chloro-2-methylphenoxy)propionate ((RS)-2,4-MCPP) and phenoxyacetate derivatives such as 2,4-dichlorophenoxyacetate (2,4-D), however it can only accept 2-oxoglutarate as oxygen acceptor. The protein is (S)-phenoxypropionate/alpha-ketoglutarate-dioxygenase of Sphingobium herbicidovorans (strain ATCC 700291 / DSM 11019 / CCUG 56400 / KCTC 2939 / LMG 18315 / NBRC 16415 / MH) (Sphingomonas herbicidovorans).